Consider the following 248-residue polypeptide: Exosome complex component Rrp41 (248 aa).

It belongs to the RNase PH family. Rrp41 subfamily. As to quaternary structure, component of the archaeal exosome complex. Forms a hexameric ring-like arrangement composed of 3 Rrp41-Rrp42 heterodimers. The hexameric ring associates with a trimer of Rrp4 and/or Csl4 subunits.

It is found in the cytoplasm. Its function is as follows. Catalytic component of the exosome, which is a complex involved in RNA degradation. Has 3'-&gt;5' exoribonuclease activity. Can also synthesize heteromeric RNA-tails. In Thermoplasma acidophilum (strain ATCC 25905 / DSM 1728 / JCM 9062 / NBRC 15155 / AMRC-C165), this protein is Exosome complex component Rrp41.